The primary structure comprises 206 residues: Protein GrpE (206 aa).

Residues 1–64 form a disordered region; sequence MSKKASMHKE…KALEEAQQQA (64 aa). The span at 46-58 shows a compositional bias: basic and acidic residues; it reads SDAKVQELEKALE.

Belongs to the GrpE family. As to quaternary structure, homodimer.

The protein localises to the cytoplasm. Participates actively in the response to hyperosmotic and heat shock by preventing the aggregation of stress-denatured proteins, in association with DnaK and GrpE. It is the nucleotide exchange factor for DnaK and may function as a thermosensor. Unfolded proteins bind initially to DnaJ; upon interaction with the DnaJ-bound protein, DnaK hydrolyzes its bound ATP, resulting in the formation of a stable complex. GrpE releases ADP from DnaK; ATP binding to DnaK triggers the release of the substrate protein, thus completing the reaction cycle. Several rounds of ATP-dependent interactions between DnaJ, DnaK and GrpE are required for fully efficient folding. This chain is Protein GrpE, found in Prosthecochloris aestuarii (strain DSM 271 / SK 413).